The following is a 434-amino-acid chain: Enolase (434 aa).

Substrate is bound by residues histidine 158 and glutamate 167. The active-site Proton donor is glutamate 210. Residues aspartate 245, glutamate 294, and aspartate 319 each coordinate Mg(2+). Residues glutamate 294 and aspartate 319 each coordinate substrate. The active-site Proton acceptor is the lysine 344. Substrate is bound by residues 371 to 374 (SHRS) and lysine 395.

Belongs to the enolase family. In terms of assembly, homodimer. The cofactor is Mg(2+).

Its subcellular location is the cytoplasm. It carries out the reaction (2R)-2-phosphoglycerate = phosphoenolpyruvate + H2O. It functions in the pathway carbohydrate degradation; glycolysis; pyruvate from D-glyceraldehyde 3-phosphate: step 4/5. The chain is Enolase from Doryteuthis pealeii (Longfin inshore squid).